The chain runs to 298 residues: Glutamyl-Q tRNA(Asp) synthetase (298 aa).

Residues 9–13 and E45 each bind L-glutamate; that span reads RFAPS. The 'HIGH' region signature appears at 12-22; sequence PSPSGELHFGS. Positions 101, 103, 115, and 119 each coordinate Zn(2+). Positions 172 and 190 each coordinate L-glutamate. The 'KMSKS' region signature appears at 228–232; it reads KLSKQ. Residue K231 participates in ATP binding.

It belongs to the class-I aminoacyl-tRNA synthetase family. GluQ subfamily. It depends on Zn(2+) as a cofactor.

Its function is as follows. Catalyzes the tRNA-independent activation of glutamate in presence of ATP and the subsequent transfer of glutamate onto a tRNA(Asp). Glutamate is transferred on the 2-amino-5-(4,5-dihydroxy-2-cyclopenten-1-yl) moiety of the queuosine in the wobble position of the QUC anticodon. This is Glutamyl-Q tRNA(Asp) synthetase from Salmonella choleraesuis (strain SC-B67).